The sequence spans 358 residues: Mitogen-activated protein kinase 1 (358 aa).

Ala-2 bears the N-acetylalanine mark. Residues 23 to 311 (YTNLSYIGEG…VEQALAHPYL (289 aa)) enclose the Protein kinase domain. Ser-27 is modified (phosphoserine; by SGK1). Residues 29 to 37 (IGEGAYGMV) and Lys-52 each bind ATP. The Proton acceptor role is filled by Asp-147. Thr-183 bears the Phosphothreonine; by MAP2K1 and MAP2K2 mark. The TXY motif lies at 183–185 (TEY). Tyr-185 bears the Phosphotyrosine; by MAP2K1 and MAP2K2 mark. Thr-188 carries the post-translational modification Phosphothreonine; by autocatalysis. Residues Ser-244, Ser-246, and Ser-282 each carry the phosphoserine modification.

The protein belongs to the protein kinase superfamily. CMGC Ser/Thr protein kinase family. MAP kinase subfamily. As to quaternary structure, binds both upstream activators and downstream substrates in multimolecular complexes. This interaction inhibits its tyrosine-kinase activity. Interacts with ADAM15, ARHGEF2, ARRB2, DAPK1 (via death domain), HSF4, IER3, IPO7, NISCH, SGK1, and isoform 1 of NEK2. Interacts (via phosphorylated form) with TPR (via C-terminal region and phosphorylated form); the interaction requires dimerization of MAPK1/ERK2 and increases following EGF stimulation. Interacts with MAP2K1. Interacts with DUSP6. Interacts (phosphorylated form) with CAV2 ('Tyr-19'-phosphorylated form); the interaction, promoted by insulin, leads to nuclear location and MAPK1 activation. Interacts with DCC. Interacts with MORG1. Interacts with PEA15. Interacts with MKNK2. MKNK2 isoform 1 binding prevents from dephosphorylation and inactivation. The phosphorylated form interacts with PML. Interacts with STYX. Interacts with CDK2AP2. Interacts with CAVIN4. Interacts with DUSP7; the interaction enhances DUSP7 phosphatase activity. Interacts with GIT1; this interaction is necessary for MAPK1 localization to focal adhesions. Interacts with ZNF263. Interacts with phosphoglycerate kinase PGK1; the interaction is direct, occurs under hypoxic conditions, and promotes interaction between PGK1 and PIN1. The cofactor is Mg(2+). Post-translationally, dually phosphorylated on Thr-183 and Tyr-185, which activates the enzyme. Ligand-activated ALK induces tyrosine phosphorylation. Dephosphorylated by PTPRJ at Tyr-185. Phosphorylated upon FLT3 and KIT signaling. Dephosphorylated by DUSP1 and DUSP2 at Thr-183 and Tyr-185. In terms of processing, ISGylated. Ubiquitinated by TRIM15 via 'Lys-63'-linked ubiquitination; leading to activation. Deubiquitinated by CYLD. As to expression, widely expressed.

It localises to the cytoplasm. The protein localises to the cytoskeleton. Its subcellular location is the spindle. The protein resides in the nucleus. It is found in the microtubule organizing center. It localises to the centrosome. The protein localises to the membrane. Its subcellular location is the caveola. The protein resides in the cell junction. It is found in the focal adhesion. The enzyme catalyses L-seryl-[protein] + ATP = O-phospho-L-seryl-[protein] + ADP + H(+). The catalysed reaction is L-threonyl-[protein] + ATP = O-phospho-L-threonyl-[protein] + ADP + H(+). With respect to regulation, phosphorylated by MAP2K1/MEK1 and MAP2K2/MEK2 on Thr-183 and Tyr-185 in response to external stimuli like insulin or NGF. Both phosphorylations are required for activity. This phosphorylation causes dramatic conformational changes, which enable full activation and interaction of MAPK1/ERK2 with its substrates. Phosphorylation on Ser-27 by SGK1 results in its activation by enhancing its interaction with MAP2K1/MEK1 and MAP2K2/MEK2. Dephosphorylated and inactivated by DUSP1, DUSP3, DUSP6 and DUSP9. Inactivated by pyrimidylpyrrole inhibitors. In terms of biological role, serine/threonine kinase which acts as an essential component of the MAP kinase signal transduction pathway. MAPK1/ERK2 and MAPK3/ERK1 are the 2 MAPKs which play an important role in the MAPK/ERK cascade. They participate also in a signaling cascade initiated by activated KIT and KITLG/SCF. Depending on the cellular context, the MAPK/ERK cascade mediates diverse biological functions such as cell growth, adhesion, survival and differentiation through the regulation of transcription, translation, cytoskeletal rearrangements. The MAPK/ERK cascade also plays a role in initiation and regulation of meiosis, mitosis, and postmitotic functions in differentiated cells by phosphorylating a number of transcription factors. About 160 substrates have already been discovered for ERKs. Many of these substrates are localized in the nucleus, and seem to participate in the regulation of transcription upon stimulation. However, other substrates are found in the cytosol as well as in other cellular organelles, and those are responsible for processes such as translation, mitosis and apoptosis. Moreover, the MAPK/ERK cascade is also involved in the regulation of the endosomal dynamics, including lysosome processing and endosome cycling through the perinuclear recycling compartment (PNRC); as well as in the fragmentation of the Golgi apparatus during mitosis. The substrates include transcription factors (such as ATF2, BCL6, ELK1, ERF, FOS, HSF4 or SPZ1), cytoskeletal elements (such as CANX, CTTN, GJA1, MAP2, MAPT, PXN, SORBS3 or STMN1), regulators of apoptosis (such as BAD, BTG2, CASP9, DAPK1, IER3, MCL1 or PPARG), regulators of translation (such as EIF4EBP1 and FXR1) and a variety of other signaling-related molecules (like ARHGEF2, DCC, FRS2 or GRB10). Protein kinases (such as RAF1, RPS6KA1/RSK1, RPS6KA3/RSK2, RPS6KA2/RSK3, RPS6KA6/RSK4, SYK, MKNK1/MNK1, MKNK2/MNK2, RPS6KA5/MSK1, RPS6KA4/MSK2, MAPKAPK3 or MAPKAPK5) and phosphatases (such as DUSP1, DUSP4, DUSP6 or DUSP16) are other substrates which enable the propagation the MAPK/ERK signal to additional cytosolic and nuclear targets, thereby extending the specificity of the cascade. Mediates phosphorylation of TPR in response to EGF stimulation. May play a role in the spindle assembly checkpoint. Phosphorylates PML and promotes its interaction with PIN1, leading to PML degradation. Phosphorylates CDK2AP2. Phosphorylates phosphoglycerate kinase PGK1 under hypoxic conditions to promote its targeting to the mitochondrion and suppress the formation of acetyl-coenzyme A from pyruvate. Acts as a transcriptional repressor. Binds to a [GC]AAA[GC] consensus sequence. Repress the expression of interferon gamma-induced genes. Seems to bind to the promoter of CCL5, DMP1, IFIH1, IFITM1, IRF7, IRF9, LAMP3, OAS1, OAS2, OAS3 and STAT1. Transcriptional activity is independent of kinase activity. The sequence is that of Mitogen-activated protein kinase 1 from Mus musculus (Mouse).